The primary structure comprises 875 residues: Neurotrypsin (875 aa).

Residues 1–20 form the signal peptide; it reads MTLARFVLALVLGALPEVVG. N26 carries N-linked (GlcNAc...) asparagine glycosylation. Residues 29 to 68 are disordered; that stretch reads LHHRHRHSPPPGPQYPYYLPTHQRPPRTRPPPPLPRFSRP. Positions 93–165 constitute a Kringle domain; that stretch reads CPPGEPWVSV…GKVDWGYCDC (73 aa). Cystine bridges form between C93/C165, C109/C149, C138/C163, C195/C259, C208/C269, C239/C249, C305/C369, C318/C379, C349/C359, C412/C475, C425/C485, C455/C465, C525/C589, C538/C599, C569/C579, C619/C750, C661/C677, C765/C831, C794/C808, and C821/C850. SRCR domains lie at 170 to 271, 280 to 381, 387 to 487, and 500 to 601; these read VRLR…TCSF, IRLV…SCTP, IRLA…ACYP, and VRLM…ICDY. Positions 619–630 are zymogen activation region; the sequence is CGLRLLHRRQKR. One can recognise a Peptidase S1 domain in the interval 631 to 874; it reads IIGGKNSLRG…FVPWIKSVTK (244 aa). The active-site Charge relay system is the H676. N-linked (GlcNAc...) asparagine glycosylation occurs at N683. Residue D726 is the Charge relay system of the active site. The active-site Charge relay system is S825.

Belongs to the peptidase S1 family.

It localises to the secreted. Functionally, plays a role in neuronal plasticity and the proteolytic action may subserve structural reorganizations associated with learning and memory operations. The chain is Neurotrypsin (PRSS12) from Trachypithecus phayrei (Phayre's leaf monkey).